We begin with the raw amino-acid sequence, 134 residues long: Global transcriptional regulator Spx (134 aa).

Cys-10 and Cys-13 are joined by a disulfide.

It belongs to the ArsC family. Spx subfamily. Interacts with the C-terminal domain of the alpha subunit of the RNAP.

The protein resides in the cytoplasm. Global transcriptional regulator that plays a key role in stress response and exerts either positive or negative regulation of genes. Acts by interacting with the C-terminal domain of the alpha subunit of the RNA polymerase (RNAP). This interaction can enhance binding of RNAP to the promoter region of target genes and stimulate their transcription, or block interaction of RNAP with activator. The chain is Global transcriptional regulator Spx from Streptococcus pyogenes serotype M6 (strain ATCC BAA-946 / MGAS10394).